The primary structure comprises 124 residues: Ribonuclease P protein component 2 (124 aa).

This sequence belongs to the eukaryotic/archaeal RNase P protein component 2 family. As to quaternary structure, consists of a catalytic RNA component and at least 4-5 protein subunits.

Its subcellular location is the cytoplasm. The catalysed reaction is Endonucleolytic cleavage of RNA, removing 5'-extranucleotides from tRNA precursor.. In terms of biological role, part of ribonuclease P, a protein complex that generates mature tRNA molecules by cleaving their 5'-ends. The polypeptide is Ribonuclease P protein component 2 (Methanothermobacter thermautotrophicus (strain ATCC 29096 / DSM 1053 / JCM 10044 / NBRC 100330 / Delta H) (Methanobacterium thermoautotrophicum)).